Consider the following 699-residue polypeptide: MSKINKLEHIRNIGICAHIDAGKTTTTERILYYTGKSHKIGEVHEGGATMDWMEQEQERGITITSAATTCRWQDKIINIIDTPGHVDFTIEVERSLRVLDGAVAVFDGVAGVEPQSETVWRQADKYNVPRMCFVNKMDRMGADFYRCVEMLKDRLGAKPLVIQLPVGIEENFKGIIDLIKMKAVIWKDEALGAEYFEEDIPADMKDKAEEYRAKLLDMVVELDDHVMEKYLSGEEVTAEEIKRLIRKGTISAAFYPVLCGSAFKNKGVQPLLDAVVDFLPSPIDIGIVKGMEVSTGEEKDFPISVTEPFAALAFKIMNDPFVGSLTFIRIYSGKIISGTTVINTVKNKREKIGRMLLMHANNREDIKEASAGDIVALAGLKDTTTGDTLSDIDQQVILERMEFPEPVIELAVEPKSTADQEKMGLALSRLAAEDPSFRVSTDYETGQTVIKGMGELHLEILIDRMRREFKVEANIGAPQVAYRETITKVCEIDYTHKKQSGGAGQFARVKIIFEPLKEVKDLKDEDKNKIFVFESKIVGGAVPKEYIPGVEKGLNNIRETGVIAGYPMIDFKATLVDGAFHDVDSSVLAFEIAAKAAFREGMPKGNPKLLEPIMQVEVITPDEYMGDIIGDLNSRRGQIQSMDPRGNAQVVTANVPLAEMFGYVNTLRSLSQGRAQFSMIFSHYDQVPSQVADIIKAKK.

Positions 8-283 (EHIRNIGICA…AVVDFLPSPI (276 aa)) constitute a tr-type G domain. Residues 17–24 (AHIDAGKT), 81–85 (DTPGH), and 135–138 (NKMD) each bind GTP.

The protein belongs to the TRAFAC class translation factor GTPase superfamily. Classic translation factor GTPase family. EF-G/EF-2 subfamily.

It localises to the cytoplasm. Functionally, catalyzes the GTP-dependent ribosomal translocation step during translation elongation. During this step, the ribosome changes from the pre-translocational (PRE) to the post-translocational (POST) state as the newly formed A-site-bound peptidyl-tRNA and P-site-bound deacylated tRNA move to the P and E sites, respectively. Catalyzes the coordinated movement of the two tRNA molecules, the mRNA and conformational changes in the ribosome. This chain is Elongation factor G, found in Rickettsia africae (strain ESF-5).